Here is a 332-residue protein sequence, read N- to C-terminus: FAD-dependent monooxygenase elcE (332 aa).

The protein belongs to the oxygen-dependent FAD-linked oxidoreductase family.

The protein operates within secondary metabolite biosynthesis. Its function is as follows. FAD-dependent monooxygenase; part of the gene cluster that mediates the biosynthesis of elsinochrome C, a perelyenequinone phytotoxin structurally similar to cercosporin. The first step of elsinochrome C biosynthesis is performed by the polyketide synthase elcA which catalyzes the formation of nor-toralactone. The starter unit acyltransferase (SAT) domain of elcA initiates polyketide extension by the selective utilization of acetyl-CoA, which is elongated to the heptaketide in the beta-ketoacyl synthase (KS) domain by successive condensations with six malonyl units introduced by the malonyl acyltransferase (MAT) domain. The product template (PT) domain catalyzes C4-C9 and C2-C11 aldol cyclizations and dehydrations to a trihydroxynaphthalene, which is thought to be delivered to the thioesterase (TE) domain for product release. The bifunctional enzyme elcB then methylates nor-toralactone to toralactone before conducting an unusual oxidative aromatic ring opening. The next step in perylenequinone biosynthesis is an O-methylation at the nascent OH-6 of the elcB product performed by the O-methyltransferase elcD. The oxidative coupling of the two monomeric naphthol units in perylenequinone biosynthesis is catalyzed by the FAD-dependent monooxygenase elcE and the multicopper oxidase elcG. ElcG might catalyze the first intermolecular coupling in a regio- and stereo-selective manner via a phenol radical coupling mechanism and the elcE could forge the second C-C bond intramolecularly via a hydride transfer mechanism. The fasciclin domain-containing protein elcF might also play a role duting this step. The last piece of the puzzle in the biosynthesis of elsinochrome C is the additional annulation by enolate coupling to afford the dihydrobenzo(ghi)perylenequinone system, catalyzed by the FAD-dependent monooxygenase elcH. This Phaeosphaeria nodorum (strain SN15 / ATCC MYA-4574 / FGSC 10173) (Glume blotch fungus) protein is FAD-dependent monooxygenase elcE.